Consider the following 161-residue polypeptide: UPF0303 protein Spro_1996 (161 aa).

It belongs to the UPF0303 family.

This chain is UPF0303 protein Spro_1996, found in Serratia proteamaculans (strain 568).